The sequence spans 564 residues: DNA ligase (564 aa).

Residue Glu234 coordinates ATP. Residue Lys236 is the N6-AMP-lysine intermediate of the active site. ATP contacts are provided by Arg241, Arg256, Glu288, and Phe323. Glu288 lines the a divalent metal cation pocket. Glu383 provides a ligand contact to a divalent metal cation. Residues Arg399 and Lys403 each contribute to the ATP site.

Belongs to the ATP-dependent DNA ligase family. A divalent metal cation is required as a cofactor.

The enzyme catalyses ATP + (deoxyribonucleotide)n-3'-hydroxyl + 5'-phospho-(deoxyribonucleotide)m = (deoxyribonucleotide)n+m + AMP + diphosphate.. Its function is as follows. DNA ligase that seals nicks in double-stranded DNA during DNA replication, DNA recombination and DNA repair. It is not essential for viral replication and recombination. The chain is DNA ligase (LIG) from Vertebrata (FPV).